Reading from the N-terminus, the 623-residue chain is Xaa-Pro aminopeptidase 1 (623 aa).

Arg77 contributes to the a peptide binding site. Lys304 bears the N6-acetyllysine mark. A peptide is bound at residue His395. Mn(2+) contacts are provided by Asp415, Asp426, and His489. 3 residues coordinate a peptide: His489, His498, and Glu523. Positions 523 and 537 each coordinate Mn(2+).

It belongs to the peptidase M24B family. Homodimer. It depends on Mn(2+) as a cofactor. As to expression, expressed in all tissues tested, including liver, adrenal decapsular tissue, adrenal capsular tissue, corpus luteum, testis, submandibular gland, thymus, brain, cerebellum and heart. Highest levels in testis.

It localises to the cytoplasm. The enzyme catalyses Release of any N-terminal amino acid, including proline, that is linked to proline, even from a dipeptide or tripeptide.. Its activity is regulated as follows. Inhibited by inositol hexakisphosphate. Metalloaminopeptidase that catalyzes the removal of a penultimate prolyl residue from the N-termini of peptides, such as Arg-Pro-Pro. Contributes to the degradation of bradykinin. In Rattus norvegicus (Rat), this protein is Xaa-Pro aminopeptidase 1.